A 547-amino-acid chain; its full sequence is Chaperonin GroEL (547 aa).

ATP-binding positions include 30-33 (TLGP), Lys51, 87-91 (DGTTT), Gly415, 479-481 (NAA), and Asp495.

It belongs to the chaperonin (HSP60) family. As to quaternary structure, forms a cylinder of 14 subunits composed of two heptameric rings stacked back-to-back. Interacts with the co-chaperonin GroES.

Its subcellular location is the cytoplasm. The catalysed reaction is ATP + H2O + a folded polypeptide = ADP + phosphate + an unfolded polypeptide.. Its function is as follows. Together with its co-chaperonin GroES, plays an essential role in assisting protein folding. The GroEL-GroES system forms a nano-cage that allows encapsulation of the non-native substrate proteins and provides a physical environment optimized to promote and accelerate protein folding. This Pseudomonas aeruginosa (strain UCBPP-PA14) protein is Chaperonin GroEL.